Here is a 279-residue protein sequence, read N- to C-terminus: HTH-type transcriptional activator RhaS (279 aa).

Positions 175 to 273 (QALLGWLQNN…SQAPKSLRHQ (99 aa)) constitute an HTH araC/xylS-type domain. 2 consecutive DNA-binding regions (H-T-H motif) follow at residues 192–213 (GSLADRFSLPLRTLHRQLKQHT) and 240–263 (ITTIAHACGFSDSNHFSTQFRKAF).

Binds DNA as a dimer.

The protein resides in the cytoplasm. Functionally, activates expression of the rhaBAD and rhaT operons. In Pectobacterium carotovorum subsp. carotovorum (strain PC1), this protein is HTH-type transcriptional activator RhaS.